The chain runs to 790 residues: Pre-mRNA-splicing factor cwf3 (790 aa).

HAT repeat units lie at residues 12-44 (DLIN…THEG), 45-77 (STLE…LRVA), 89-121 (EAFA…FLMK), 123-157 (PNVT…YAED), 159-190 (GGLF…KLGL), 193-228 (EAAR…LVVQ), 233-266 (TQNI…YYIR), 268-303 (GDYE…FEEQ), 331-364 (KILD…FLED), 368-402 (KVVQ…FYEN), 404-440 (DDLE…MELR), 457-492 (APRK…LEES), 494-526 (GTIE…LLEE), 528-562 (AYFE…KFVK), 567-601 (THME…FEEK), 639-673 (YGVL…METK), and 675-709 (GEID…FEIR). The tract at residues 769–790 (LAGFVLSKSNPQETSKITGEEN) is disordered. Positions 775 to 790 (SKSNPQETSKITGEEN) are enriched in polar residues.

The protein belongs to the crooked-neck family. In terms of assembly, belongs to the 40S cdc5-associated complex (or cwf complex), a spliceosome sub-complex reminiscent of a late-stage spliceosome composed of the U2, U5 and U6 snRNAs and at least brr2, cdc5, cwf2/prp3, cwf3/syf1, cwf4/syf3, cwf5/ecm2, spp42/cwf6, cwf7/spf27, cwf8, cwf9, cwf10, cwf11, cwf12, prp45/cwf13, cwf14, cwf15, cwf16, cwf17, cwf18, cwf19, cwf20, cwf21, cwf22, cwf23, cwf24, cwf25, cwf26, cyp7/cwf27, cwf28, cwf29/ist3, lea1, msl1, prp5/cwf1, prp10, prp12/sap130, prp17, prp22, sap61, sap62, sap114, sap145, slu7, smb1, smd1, smd3, smf1, smg1 and syf2.

The protein localises to the nucleus. In terms of biological role, involved in pre-mRNA splicing and cell cycle progression. This is Pre-mRNA-splicing factor cwf3 (cwf3) from Schizosaccharomyces pombe (strain 972 / ATCC 24843) (Fission yeast).